Consider the following 138-residue polypeptide: Basic phospholipase A2 ammodytoxin C (138 aa).

Residues M1–G16 form the signal peptide. 7 disulfides stabilise this stretch: C42-C131, C44-C60, C59-C111, C65-C138, C66-C104, C73-C97, and C91-C102. 3 residues coordinate Ca(2+): Y43, G45, and G47. The active site involves H63. Residue D64 participates in Ca(2+) binding. The active site involves D105.

It belongs to the phospholipase A2 family. Group II subfamily. D49 sub-subfamily. Monomer. Binds to calmodulin, coagulation factor X (F10), 14-3-3 proteins gamma (YWHAG) and epsilon (YWHAE), and R25, a mitochondrial membrane protein. May bind to M-type PLA2 receptor (R-180). Ca(2+) serves as cofactor. In terms of tissue distribution, expressed by the venom gland.

Its subcellular location is the secreted. The protein resides in the host cytoplasm. It localises to the host cytosol. It carries out the reaction a 1,2-diacyl-sn-glycero-3-phosphocholine + H2O = a 1-acyl-sn-glycero-3-phosphocholine + a fatty acid + H(+). Its function is as follows. Snake venom phospholipase A2 (PLA2) that acts as a presynaptic neurotoxin, an inhibitor of blood coagulation, and has been found to bind with high affinity to intracellular proteins. The response of indirectly stimulated neuromuscular preparations to ammodytoxin (Atx) is triphasic. The first phase, the transient inhibition of the acetylcholine (ACh) release, starts soon after the addition of Atx and lasts for several minutes. This phase is probably independent of Atx enzymatic activity. The effect may be due to the specific binding of the toxin to presynaptic receptors. These receptors, called N-type receptors, are still unidentified. It is noteworthy that a neuronal isoform of the M-type PLA2 receptor (R180) has been identified as a high-affinity receptor for Atx in neuronal plasma membranes. It was demonstrated however that this receptor is not essential for expression of neurotoxicity by Atx. The second phase corresponds to an augmentation of neurotransmitter release. A peak is reached 10-20 minutes after exposure of the preparation to Atx and is followed by a gradual reduction. In this phase, the enzymatic activity of Atx of the mammalian is not significant. It is speculated that the increased release of neurotransmitter in this phase is induced by the interference of Atx with voltage-gated potassium channels. Measurements of ionic showed however that voltage-gated potassium channels are not affected by Atx. The third phase of the response of neuromuscular preparations to Atx, which corresponds to a complete and irreversible paralysis, is clearly dependent on the hydrolytic activity of the toxin. In addition to its presynaptic neurotoxicity, Atx shows an anticoagulant activity by binding with high affinity to activated coagulation factor X (F10) thus inhibiting the formation of the prothrombinase complex (FX/FV) and its activity (IC(50) is 240 nM). Surprisingly, Atx was discovered to bind intracellular proteins such as calmodulin (CaM), 14-3-3 proteins gamma (YWHAG) and epsilon (YWHAE), as well as R25, a mitochondrial integral membrane protein found in cerebral cortex. These findings raised a doubt about the dogma of the exclusively extracellular action of PLA2s, defended by the potential instability of these molecules in the reducing environment of the eukaryotic cytosol coupled with their possible inability to act as enzymes in this cellular compartment, due to too low concentration of calcium ions. This hypothesis was challenged efficiently by demonstrating the internalization of AtxA into a culture cells, but still remains to be directly demonstrated in vivo. PLA2 catalyzes the calcium-dependent hydrolysis of the 2-acyl groups in 3-sn-phosphoglycerides. This Vipera ammodytes ammodytes (Western sand viper) protein is Basic phospholipase A2 ammodytoxin C.